The sequence spans 463 residues: Probable diacyglycerol O-acyltransferase tgs1 (463 aa).

His137 (proton acceptor) is an active-site residue.

The protein belongs to the long-chain O-acyltransferase family.

It carries out the reaction an acyl-CoA + a 1,2-diacyl-sn-glycerol = a triacyl-sn-glycerol + CoA. Its pathway is glycerolipid metabolism; triacylglycerol biosynthesis. In terms of biological role, catalyzes the terminal and only committed step in triacylglycerol synthesis by using diacylglycerol and fatty acyl CoA as substrates. Required for storage lipid synthesis. The protein is Probable diacyglycerol O-acyltransferase tgs1 (tgs1) of Mycobacterium tuberculosis (strain CDC 1551 / Oshkosh).